The primary structure comprises 151 residues: Ribosome maturation factor RimP (151 aa).

It belongs to the RimP family.

Its subcellular location is the cytoplasm. Its function is as follows. Required for maturation of 30S ribosomal subunits. The protein is Ribosome maturation factor RimP of Shewanella putrefaciens (strain CN-32 / ATCC BAA-453).